The sequence spans 160 residues: Large ribosomal subunit protein uL22c (160 aa).

Belongs to the universal ribosomal protein uL22 family. As to quaternary structure, part of the 50S ribosomal subunit.

It localises to the plastid. It is found in the chloroplast. Its function is as follows. This protein binds specifically to 23S rRNA. Functionally, the globular domain of the protein is located near the polypeptide exit tunnel on the outside of the subunit, while an extended beta-hairpin is found that lines the wall of the exit tunnel in the center of the 70S ribosome. This Panax ginseng (Korean ginseng) protein is Large ribosomal subunit protein uL22c (rpl22).